The sequence spans 138 residues: Basic phospholipase A2 homolog Tpu-K49a (138 aa).

A signal peptide spans 1 to 16; that stretch reads MRTLWIMAVLLVGVEG. Cystine bridges form between Cys42–Cys131, Cys44–Cys60, Cys59–Cys111, Cys65–Cys138, Cys66–Cys104, and Cys91–Cys102. Residues 121 to 133 form an important for membrane-damaging activities in eukaryotes and bacteria; heparin-binding region; the sequence is KKERINTKIFCKK.

Monomer. As to expression, expressed by the venom gland.

The protein resides in the secreted. Its function is as follows. Snake venom phospholipase A2 homolog that lacks catalytic activity. Induces local edema a few hours after injection in the hind foot. Is myotoxic. A model of myotoxic mechanism has been proposed: an apo Lys49-PLA2 is activated by the entrance of a hydrophobic molecule (e.g. fatty acid) at the hydrophobic channel of the protein leading to a reorientation of a monomer. This reorientation causes a transition between 'inactive' to 'active' states, causing alignment of C-terminal and membrane-docking sites (MDoS) side-by-side and putting the membrane-disruption sites (MDiS) in the same plane, exposed to solvent and in a symmetric position for both monomers. The MDoS region stabilizes the toxin on membrane by the interaction of charged residues with phospholipid head groups. Subsequently, the MDiS region destabilizes the membrane with penetration of hydrophobic residues. This insertion causes a disorganization of the membrane, allowing an uncontrolled influx of ions (i.e. calcium and sodium), and eventually triggering irreversible intracellular alterations and cell death. The sequence is that of Basic phospholipase A2 homolog Tpu-K49a from Craspedocephalus puniceus (Flat-nosed pitviper).